The primary structure comprises 311 residues: Dihydroorotate dehydrogenase A (fumarate) (311 aa).

FMN is bound by residues serine 19 and 43-44; that span reads KS. Residues lysine 43, 67-71, and asparagine 127 each bind substrate; that span reads NSMGL. Position 127 (asparagine 127) interacts with FMN. The active-site Nucleophile is cysteine 130. Residues lysine 164 and valine 192 each contribute to the FMN site. 193–194 lines the substrate pocket; sequence NS. Residues glycine 221, 249 to 250, and 271 to 272 contribute to the FMN site; these read GG and GT.

Belongs to the dihydroorotate dehydrogenase family. Type 1 subfamily. As to quaternary structure, homodimer. FMN serves as cofactor.

The protein localises to the cytoplasm. The catalysed reaction is (S)-dihydroorotate + fumarate = orotate + succinate. Its pathway is pyrimidine metabolism; UMP biosynthesis via de novo pathway. Catalyzes the conversion of dihydroorotate to orotate with fumarate as the electron acceptor. This Lactococcus lactis subsp. cremoris (Streptococcus cremoris) protein is Dihydroorotate dehydrogenase A (fumarate) (pyrDA).